We begin with the raw amino-acid sequence, 262 residues long: uncharacterized protein (262 aa).

The 219-residue stretch at 5–223 folds into the ABC transporter domain; sequence IKVENLTKYF…MAYIEYLDNG (219 aa). ATP is bound at residue 37-44; the sequence is GHNGAGKT.

It belongs to the ABC transporter superfamily.

This is an uncharacterized protein from Methanocaldococcus jannaschii (strain ATCC 43067 / DSM 2661 / JAL-1 / JCM 10045 / NBRC 100440) (Methanococcus jannaschii).